Consider the following 341-residue polypeptide: UDP-3-O-(3-hydroxymyristoyl)glucosamine N-acyltransferase (341 aa).

The Proton acceptor role is filled by His239.

It belongs to the transferase hexapeptide repeat family. LpxD subfamily. As to quaternary structure, homotrimer.

The enzyme catalyses a UDP-3-O-[(3R)-3-hydroxyacyl]-alpha-D-glucosamine + a (3R)-hydroxyacyl-[ACP] = a UDP-2-N,3-O-bis[(3R)-3-hydroxyacyl]-alpha-D-glucosamine + holo-[ACP] + H(+). The catalysed reaction is UDP-3-O-[(3R)-3-hydroxytetradecanoyl]-alpha-D-glucosamine + (3R)-hydroxytetradecanoyl-[ACP] = UDP-2-N,3-O-bis[(3R)-3-hydroxytetradecanoyl]-alpha-D-glucosamine + holo-[ACP] + H(+). Its pathway is glycolipid biosynthesis; lipid IV(A) biosynthesis; lipid IV(A) from (3R)-3-hydroxytetradecanoyl-[acyl-carrier-protein] and UDP-N-acetyl-alpha-D-glucosamine: step 3/6. Catalyzes the N-acylation of UDP-3-O-(hydroxytetradecanoyl)glucosamine using 3-hydroxytetradecanoyl-ACP as the acyl donor. Is involved in the biosynthesis of lipid A, a phosphorylated glycolipid that anchors the lipopolysaccharide to the outer membrane of the cell. The protein is UDP-3-O-(3-hydroxymyristoyl)glucosamine N-acyltransferase of Escherichia coli O157:H7.